Consider the following 116-residue polypeptide: Large ribosomal subunit protein uL18 (116 aa).

It belongs to the universal ribosomal protein uL18 family. In terms of assembly, part of the 50S ribosomal subunit; part of the 5S rRNA/L5/L18/L25 subcomplex. Contacts the 5S and 23S rRNAs.

This is one of the proteins that bind and probably mediate the attachment of the 5S RNA into the large ribosomal subunit, where it forms part of the central protuberance. The protein is Large ribosomal subunit protein uL18 of Pseudomonas syringae pv. tomato (strain ATCC BAA-871 / DC3000).